A 1380-amino-acid polypeptide reads, in one-letter code: Mitogen-activated protein kinase kinase kinase 5 (1380 aa).

Residues 30–97 are disordered; sequence CRRGGGAATA…GNSGSGGGRR (68 aa). Positions 37–49 are enriched in low complexity; the sequence is ATAAEGEPSLQPL. The segment covering 50-59 has biased composition (pro residues); it reads LVPPPPPPPG. Residues R85 and R87 each carry the asymmetric dimethylarginine modification. S90 carries the post-translational modification Phosphoserine; by PIM1 and PKB/AKT1. An interaction with PPIA/CYPA region spans residues 649–1374; that stretch reads HCKRFFEMVN…MLCTLWKAII (726 aa). Residues 687–945 form the Protein kinase domain; it reads NGDRVVLGKG…ANDLLIDEFL (259 aa). ATP contacts are provided by residues 693–701 and K716; that span reads LGKGTYGIV. Position 725 is a phosphotyrosine (Y725). The Proton acceptor role is filled by D810. The residue at position 820 (T820) is a Phosphothreonine; by autocatalysis. At T845 the chain carries Phosphothreonine; by autocatalysis, MELK and MAP3K6. Position 849 is a phosphothreonine; by autocatalysis (T849). S965 is subject to Phosphoserine. Residue S973 is modified to Phosphoserine; by autocatalysis. Phosphoserine occurs at positions 1036 and 1040. The segment at 1188–1215 is disordered; the sequence is ASESDTADPEDLDVEDEHEELSSNQTVR. Positions 1192 to 1206 are enriched in acidic residues; that stretch reads DTADPEDLDVEDEHE. Residues 1252–1292 are a coiled coil; the sequence is LGRMKIETNRLLEELVRKERELQALLHQAIEEKDQEIRHLK.

It belongs to the protein kinase superfamily. STE Ser/Thr protein kinase family. MAP kinase kinase kinase subfamily. As to quaternary structure, homodimer when inactive. Binds both upstream activators and downstream substrates in multimolecular complexes. Part of a cytoplasmic complex made of HIPK1, DAB2IP and MAP3K5 in response to TNF. This complex formation promotes MAP3K5-JNK activation and subsequent apoptosis. Interacts with SOCS1 which recognizes phosphorylation of Tyr-725 and induces MAP3K5/ASK1 degradation in endothelial cells. Interacts with the 14-3-3 family proteins such as YWHAB, YWHAE, YWHAQ, YWHAH, YWHAZ and SFN. Interacts with ARRB2, BIRC2, DAB2IP, IGF1R, MAP3K6/ASK2, PIM1, PGAM5, SOCS1, STUB1, TRAF2 and TXN. Interacts with ERN1 in a TRAF2-dependent manner. Interacts with calcineurin subunit PPP3R1, PPP5C, PPM1L and TRAF6. Interacts (via N-terminus) with RAF1 and this interaction inhibits the proapoptotic function of MAP3K5. Interacts with DAB2IP (via N-terminus C2 domain); the interaction occurs in a TNF-alpha-dependent manner. Interacts with DUSP13A; may positively regulate apoptosis. Interacts with PPIA/CYPA. Interacts with PRMT1; the interaction results in MAP3K5 methylation by PRMT1 which inhibits MAP3K5 activation. Interacts with TRAF2; the interaction is inhibited by PRMT1. Interacts with TRIM48. The cofactor is Mg(2+). Ser-90 and Ser-1040 are inactivating phosphorylation sites, the former of which is phosphorylated by AKT1. Phosphorylated at Ser-973 which induces association of MAP3K5/ASK1 with the 14-3-3 family proteins and suppresses MAP3K5/ASK1 activity. Calcineurin (CN) dephosphorylates this site. Also dephosphorylated and activated by PGAM5. Phosphorylated at Thr-845 through autophosphorylation and by MAP3K6/ASK2 which leads to activation. Thr-845 is dephosphorylated by PPP5C. Phosphorylation at Ser-973 in response to oxidative stress is negatively regulated by PPIA/CYPA. Post-translationally, ubiquitinated. Tumor necrosis factor (TNF) induces TNFR2-dependent ubiquitination, leading to proteasomal degradation. Ubiquitinated by RC3H2 in a TRIM48-dependent manner. In terms of processing, methylation at Arg-85 and Arg-87 by PRMT1 promotes association of MAP3K5 with thioredoxin and negatively regulates MAP3K5 association with TRAF2, inhibiting MAP3K5 activation. Methylation is blocked by ubiquitination of PRMT1 by TRIM48. In terms of tissue distribution, expressed in various adult mouse tissues including heart, brain, lung, liver and kidney.

It is found in the cytoplasm. Its subcellular location is the endoplasmic reticulum. It carries out the reaction L-seryl-[protein] + ATP = O-phospho-L-seryl-[protein] + ADP + H(+). The catalysed reaction is L-threonyl-[protein] + ATP = O-phospho-L-threonyl-[protein] + ADP + H(+). Activated by various stressors, including oxidative stress, endoplasmic reticulum stress, and calcium overload, as well as by receptor-mediated inflammatory signals, such as the tumor necrosis factor (TNF) and lipopolysaccharide (LPS). Homophilic association of MAP3K5/ASK1 through the C-terminal coiled-coil domains and the heteromeric complex formation of MAP3K5/ASK1 with the reduced form of thioredoxin (TXN), constitutes an inactive form of the kinase. Upon ROS-induced dissociation of TXN from MAP3K5/ASK1, TRAF2 and TRAF6 are reciprocally recruited to MAP3K5/ASK1 and form the active MAP3K5/ASK1 signalosome, in which TRAF2 and TRAF6 appear to facilitate the active configuration of MAP3K5/ASK1. MAP3K5/ASK1 activity is also regulated through several phosphorylation and dephosphorylation events. Thr-845 is an activating phosphorylation site that is autophosphorylated and phosphorylated by MAP3K6/ASK2 and dephosphorylated by PPP5C. Ser-90 and Ser-1040 are inactivating phosphorylation sites, the former of which is phosphorylated by AKT1. Phosphorylation of Ser-973 induces association of MAP3K5/ASK1 with the 14-3-3 family proteins, which suppresses MAP3K5/ASK1 activity. Calcium/calmodulin-activated protein phosphatase calcineurin (PPP3CA) has been shown to directly dephosphorylate this site. SOCS1 binds to ASK1 by recognizing phosphorylation of Tyr-725 and induces MAP3K5/ASK1 degradation in endothelial cells. Also dephosphorylated and activated by PGAM5. Contains an N-terminal autoinhibitory domain. Serine/threonine kinase which acts as an essential component of the MAP kinase signal transduction pathway. Plays an important role in the cascades of cellular responses evoked by changes in the environment. Mediates signaling for determination of cell fate such as differentiation and survival. Plays a crucial role in the apoptosis signal transduction pathway through mitochondria-dependent caspase activation. MAP3K5/ASK1 is required for the innate immune response, which is essential for host defense against a wide range of pathogens. Mediates signal transduction of various stressors like oxidative stress as well as by receptor-mediated inflammatory signals, such as the tumor necrosis factor (TNF) or lipopolysaccharide (LPS). Once activated, acts as an upstream activator of the MKK/JNK signal transduction cascade and the p38 MAPK signal transduction cascade through the phosphorylation and activation of several MAP kinase kinases like MAP2K4/SEK1, MAP2K3/MKK3, MAP2K6/MKK6 and MAP2K7/MKK7. These MAP2Ks in turn activate p38 MAPKs and c-jun N-terminal kinases (JNKs). Both p38 MAPK and JNKs control the transcription factors activator protein-1 (AP-1). This is Mitogen-activated protein kinase kinase kinase 5 (Map3k5) from Mus musculus (Mouse).